Here is a 369-residue protein sequence, read N- to C-terminus: MNKAYYIGLMSGTSMDGVDAVLVDFAGEQPQLIATHTEAIPSHLLKGLQRLCLPGNDEINRLGRLDRSVGKLFALAVNNLLAKAQIAKEDIIAIGSHGQTVRHMPNLEVGFTLQIGDPNTIATETGIDVIADFRRKDIALGGQGAPLVPAFHQQTFAQVGKKRVILNIGGIANITYLTGNREEVLGFDTGPGNTLIDAWIQQVKNEPYDKDGEWAASGKTDQQLLAQLLSHPYFSLAYPKSTGRELFNQAWLEQQLSQFNQLDEEDIQSTLLDLTCHSIARDILKLAPVGELFVCGGGAFNSELMQRLAALLPDYHIDTTSALGVDPKWAEGIAFAWLAMRHHLGLPANLPAVTGASREAVLGGRFSAK.

An ATP-binding site is contributed by 12-19 (GTSMDGVD).

Belongs to the anhydro-N-acetylmuramic acid kinase family.

The catalysed reaction is 1,6-anhydro-N-acetyl-beta-muramate + ATP + H2O = N-acetyl-D-muramate 6-phosphate + ADP + H(+). It participates in amino-sugar metabolism; 1,6-anhydro-N-acetylmuramate degradation. Its pathway is cell wall biogenesis; peptidoglycan recycling. Functionally, catalyzes the specific phosphorylation of 1,6-anhydro-N-acetylmuramic acid (anhMurNAc) with the simultaneous cleavage of the 1,6-anhydro ring, generating MurNAc-6-P. Is required for the utilization of anhMurNAc either imported from the medium or derived from its own cell wall murein, and thus plays a role in cell wall recycling. The sequence is that of Anhydro-N-acetylmuramic acid kinase from Shewanella sp. (strain ANA-3).